A 417-amino-acid chain; its full sequence is MAEIKNYTLNFGPQHPAAHGVLRLVLELDGEVIQRADPHIGLLHRATEKLAESKTFIQSVPYMDRLDYVSMMVNEHGYVLAIEKLLGIEVPERAQYIRVLFDEITRVLNHLMWIGAHALDVGAMAVFLYAFREREDLMDVYEAVSGARMHAAYYRPGGVYRDLPDAMPQYKASKIRNEKALAKMNEARSGSVLDFIDDFFTRFPKCVDEYETLLTDNRIWKQRLVGIGVVSPERALQMGLTGPMLRGSGIAWDLRKKQPYEVYDRMDFDVPVGVNGDCYDRYLVRVEEMRQSILIAKQCIEWLRKNPGPVMTDNHKVAPPSRVGMKTNMEDLIHHFKLFTEGFHVPEGEAYAAVEHPKGEFGIYLVSDGANKPYRLKIRAPGFAHLASLDEMARGHMIADAVTIIGTQDIVFGEIDR.

This sequence belongs to the complex I 49 kDa subunit family. As to quaternary structure, NDH-1 is composed of 14 different subunits. Subunits NuoB, C, D, E, F, and G constitute the peripheral sector of the complex.

Its subcellular location is the cell inner membrane. It carries out the reaction a quinone + NADH + 5 H(+)(in) = a quinol + NAD(+) + 4 H(+)(out). Its function is as follows. NDH-1 shuttles electrons from NADH, via FMN and iron-sulfur (Fe-S) centers, to quinones in the respiratory chain. The immediate electron acceptor for the enzyme in this species is believed to be ubiquinone. Couples the redox reaction to proton translocation (for every two electrons transferred, four hydrogen ions are translocated across the cytoplasmic membrane), and thus conserves the redox energy in a proton gradient. This chain is NADH-quinone oxidoreductase subunit D, found in Burkholderia orbicola (strain MC0-3).